The sequence spans 523 residues: Ribonuclease Y (523 aa).

Residues 18–38 traverse the membrane as a helical segment; that stretch reads WSLTVALVIGGALGFLVVWAF. Positions 213 to 276 constitute a KH domain; the sequence is TSTIVSLPNE…EVARGALEAL (64 aa). Residues 339–432 enclose the HD domain; it reads VLDHSVETAS…VILADTISAT (94 aa).

This sequence belongs to the RNase Y family.

The protein resides in the cell membrane. Its function is as follows. Endoribonuclease that initiates mRNA decay. This Opitutus terrae (strain DSM 11246 / JCM 15787 / PB90-1) protein is Ribonuclease Y.